The sequence spans 414 residues: MSIVEMGKNAKQAAKELAQANTELKNNVLHELEKSLLDNAEYILQQNQKDLDNAKKNNLSKAFVDRLTLTPARIESMAQGVRQIADFADPIGKIEKGFKHPKGMTISQIRVPLGVIAMIFESRPNVTIDAGALALKSGNAIILRGGSDALHTNIALKNIFQEVCEKHGLSKNIVQLVEDIARERVTELVTLDKYIDVIIPRGGKSLKKAIQQQATISMIETGAGICHTYIDEFADLDKAIKIVINAKTQRPGVCNALESLLVHQNIAEKFLPKLEIELAKYNVELRADNESLKYLGNAILATPEDWDTEYLDLVLSIKTVANINEAIEHINTHGSMHSECIVTESYTNTEIFLNEVDAAAVYANASTRFTDGSEFGFGGEIGISTQKLHARGPMGINELTTLKYIIRGNGQVRG.

The protein belongs to the gamma-glutamyl phosphate reductase family.

It localises to the cytoplasm. The catalysed reaction is L-glutamate 5-semialdehyde + phosphate + NADP(+) = L-glutamyl 5-phosphate + NADPH + H(+). It participates in amino-acid biosynthesis; L-proline biosynthesis; L-glutamate 5-semialdehyde from L-glutamate: step 2/2. Its function is as follows. Catalyzes the NADPH-dependent reduction of L-glutamate 5-phosphate into L-glutamate 5-semialdehyde and phosphate. The product spontaneously undergoes cyclization to form 1-pyrroline-5-carboxylate. This Francisella philomiragia subsp. philomiragia (strain ATCC 25017 / CCUG 19701 / FSC 153 / O#319-036) protein is Gamma-glutamyl phosphate reductase.